The sequence spans 184 residues: uncharacterized protein (184 aa).

Residues 130–149 are disordered; it reads DKDDDKKKKKKDDKKDDPCN.

It is found in the virion. This is an uncharacterized protein from Acanthamoeba polyphaga (Amoeba).